The primary structure comprises 845 residues: Protein TSD2 (845 aa).

The tract at residues 193-283 is disordered; it reads DVDSDSESDS…SASATRLTNA (91 aa). 2 stretches are compositionally biased toward basic and acidic residues: residues 202–212 and 230–242; these read SDSHSDSHSDS and ARSH…DGSG. A compositionally biased stretch (basic residues) spans 243–272; sequence GKRKRGSHSPLSRRRQRHKQGQRHKPRHRS.

Belongs to the CDC45 family.

The protein resides in the nucleus. In terms of biological role, temperature-sensitive protein required for DNA synthesis. May be a transcription factor that regulates the level or influences the stability of DNA polymerases or auxiliary proteins. The sequence is that of Protein TSD2 (TSD2) from Mycosarcoma maydis (Corn smut fungus).